The sequence spans 304 residues: ADP-polyphosphate phosphotransferase (304 aa).

This sequence belongs to the polyphosphate kinase 2 (PPK2) family. Class I subfamily.

The catalysed reaction is [phosphate](n) + ATP = [phosphate](n+1) + ADP. Its function is as follows. Uses inorganic polyphosphate (polyP) as a donor to convert ADP to ATP. This Pseudomonas aeruginosa (strain ATCC 15692 / DSM 22644 / CIP 104116 / JCM 14847 / LMG 12228 / 1C / PRS 101 / PAO1) protein is ADP-polyphosphate phosphotransferase.